We begin with the raw amino-acid sequence, 447 residues long: Methylenetetrahydrofolate--tRNA-(uracil-5-)-methyltransferase TrmFO (447 aa).

9 to 14 (GGGLAG) contributes to the FAD binding site.

Belongs to the MnmG family. TrmFO subfamily. Requires FAD as cofactor.

It localises to the cytoplasm. It catalyses the reaction uridine(54) in tRNA + (6R)-5,10-methylene-5,6,7,8-tetrahydrofolate + NADH + H(+) = 5-methyluridine(54) in tRNA + (6S)-5,6,7,8-tetrahydrofolate + NAD(+). It carries out the reaction uridine(54) in tRNA + (6R)-5,10-methylene-5,6,7,8-tetrahydrofolate + NADPH + H(+) = 5-methyluridine(54) in tRNA + (6S)-5,6,7,8-tetrahydrofolate + NADP(+). Its function is as follows. Catalyzes the folate-dependent formation of 5-methyl-uridine at position 54 (M-5-U54) in all tRNAs. The sequence is that of Methylenetetrahydrofolate--tRNA-(uracil-5-)-methyltransferase TrmFO from Paramagnetospirillum magneticum (strain ATCC 700264 / AMB-1) (Magnetospirillum magneticum).